The primary structure comprises 282 residues: Bifunctional protein FolD (282 aa).

Residues 164-166 (GRS) and Ser-189 each bind NADP(+).

The protein belongs to the tetrahydrofolate dehydrogenase/cyclohydrolase family. Homodimer.

It catalyses the reaction (6R)-5,10-methylene-5,6,7,8-tetrahydrofolate + NADP(+) = (6R)-5,10-methenyltetrahydrofolate + NADPH. It carries out the reaction (6R)-5,10-methenyltetrahydrofolate + H2O = (6R)-10-formyltetrahydrofolate + H(+). It participates in one-carbon metabolism; tetrahydrofolate interconversion. Functionally, catalyzes the oxidation of 5,10-methylenetetrahydrofolate to 5,10-methenyltetrahydrofolate and then the hydrolysis of 5,10-methenyltetrahydrofolate to 10-formyltetrahydrofolate. The protein is Bifunctional protein FolD of Lachnoclostridium phytofermentans (strain ATCC 700394 / DSM 18823 / ISDg) (Clostridium phytofermentans).